A 340-amino-acid polypeptide reads, in one-letter code: Biotin synthase (340 aa).

Positions 47 to 269 (SELQLSQLLS…VAVARIVCPK (223 aa)) constitute a Radical SAM core domain. Residues Cys62, Cys66, and Cys69 each contribute to the [4Fe-4S] cluster site. 4 residues coordinate [2Fe-2S] cluster: Cys106, Cys137, Cys197, and Arg273.

It belongs to the radical SAM superfamily. Biotin synthase family. As to quaternary structure, homodimer. It depends on [4Fe-4S] cluster as a cofactor. Requires [2Fe-2S] cluster as cofactor.

It catalyses the reaction (4R,5S)-dethiobiotin + (sulfur carrier)-SH + 2 reduced [2Fe-2S]-[ferredoxin] + 2 S-adenosyl-L-methionine = (sulfur carrier)-H + biotin + 2 5'-deoxyadenosine + 2 L-methionine + 2 oxidized [2Fe-2S]-[ferredoxin]. The protein operates within cofactor biosynthesis; biotin biosynthesis; biotin from 7,8-diaminononanoate: step 2/2. Its function is as follows. Catalyzes the conversion of dethiobiotin (DTB) to biotin by the insertion of a sulfur atom into dethiobiotin via a radical-based mechanism. This chain is Biotin synthase, found in Caulobacter sp. (strain K31).